Reading from the N-terminus, the 138-residue chain is Small ribosomal subunit protein uS11c (138 aa).

Positions 1-25 (MAKSIPRTGSRRNVRSGSRKSTRRI) are disordered. The segment covering 9–25 (GSRRNVRSGSRKSTRRI) has biased composition (basic residues).

The protein belongs to the universal ribosomal protein uS11 family. As to quaternary structure, part of the 30S ribosomal subunit.

The protein localises to the plastid. It localises to the chloroplast. The sequence is that of Small ribosomal subunit protein uS11c from Eucalyptus globulus subsp. globulus (Tasmanian blue gum).